The following is a 142-amino-acid chain: uncharacterized protein (142 aa).

Residues 1-138 (MLEKLAEAHP…SFMILVKPLA (138 aa)) form the N-acetyltransferase domain.

This is an uncharacterized protein from Bacillus subtilis (strain 168).